Here is a 549-residue protein sequence, read N- to C-terminus: Cytoplasmic trehalase (549 aa).

Residues arginine 168, 175-176 (WD), asparagine 212, 221-223 (RSQ), 292-294 (RDE), and glycine 324 each bind substrate. Catalysis depends on proton donor/acceptor residues aspartate 326 and glutamate 509. Glutamate 525 is a binding site for substrate.

The protein belongs to the glycosyl hydrolase 37 family. As to quaternary structure, monomer.

The protein resides in the cytoplasm. The enzyme catalyses alpha,alpha-trehalose + H2O = alpha-D-glucose + beta-D-glucose. It participates in glycan degradation; trehalose degradation; D-glucose from alpha,alpha-trehalose: step 1/1. Its function is as follows. Hydrolyzes trehalose to glucose. Could be involved, in cells returning to low osmolarity conditions, in the utilization of the accumulated cytoplasmic trehalose, which was synthesized in response to high osmolarity. This Escherichia fergusonii (strain ATCC 35469 / DSM 13698 / CCUG 18766 / IAM 14443 / JCM 21226 / LMG 7866 / NBRC 102419 / NCTC 12128 / CDC 0568-73) protein is Cytoplasmic trehalase.